A 288-amino-acid chain; its full sequence is Diaminopimelate epimerase (288 aa).

Substrate contacts are provided by Asn-14 and Asn-67. Cys-76 (proton donor) is an active-site residue. Substrate-binding positions include 77–78, Asn-166, Asn-199, and 217–218; these read GN and ER. Residue Cys-226 is the Proton acceptor of the active site. 227-228 contacts substrate; sequence GT.

Belongs to the diaminopimelate epimerase family. Homodimer.

It localises to the cytoplasm. It carries out the reaction (2S,6S)-2,6-diaminopimelate = meso-2,6-diaminopimelate. It functions in the pathway amino-acid biosynthesis; L-lysine biosynthesis via DAP pathway; DL-2,6-diaminopimelate from LL-2,6-diaminopimelate: step 1/1. Functionally, catalyzes the stereoinversion of LL-2,6-diaminopimelate (L,L-DAP) to meso-diaminopimelate (meso-DAP), a precursor of L-lysine and an essential component of the bacterial peptidoglycan. The protein is Diaminopimelate epimerase of Bacillus mycoides (strain KBAB4) (Bacillus weihenstephanensis).